The chain runs to 635 residues: Threonine--tRNA ligase (635 aa).

The 61-residue stretch at 1–61 (MIAITLPDGS…DRDAELAIVT (61 aa)) folds into the TGS domain. The catalytic stretch occupies residues 242–533 (DHRKLGKTLD…LLENHAGALP (292 aa)). 3 residues coordinate Zn(2+): Cys333, His384, and His510.

Belongs to the class-II aminoacyl-tRNA synthetase family. In terms of assembly, homodimer. Zn(2+) is required as a cofactor.

Its subcellular location is the cytoplasm. The enzyme catalyses tRNA(Thr) + L-threonine + ATP = L-threonyl-tRNA(Thr) + AMP + diphosphate + H(+). Functionally, catalyzes the attachment of threonine to tRNA(Thr) in a two-step reaction: L-threonine is first activated by ATP to form Thr-AMP and then transferred to the acceptor end of tRNA(Thr). Also edits incorrectly charged L-seryl-tRNA(Thr). In Cupriavidus necator (strain ATCC 17699 / DSM 428 / KCTC 22496 / NCIMB 10442 / H16 / Stanier 337) (Ralstonia eutropha), this protein is Threonine--tRNA ligase.